The chain runs to 211 residues: Ribosomal RNA large subunit methyltransferase E (211 aa).

5 residues coordinate S-adenosyl-L-methionine: glycine 60, tryptophan 62, aspartate 85, aspartate 101, and aspartate 126. The Proton acceptor role is filled by lysine 166.

This sequence belongs to the class I-like SAM-binding methyltransferase superfamily. RNA methyltransferase RlmE family.

The protein resides in the cytoplasm. The catalysed reaction is uridine(2552) in 23S rRNA + S-adenosyl-L-methionine = 2'-O-methyluridine(2552) in 23S rRNA + S-adenosyl-L-homocysteine + H(+). Functionally, specifically methylates the uridine in position 2552 of 23S rRNA at the 2'-O position of the ribose in the fully assembled 50S ribosomal subunit. In Bordetella petrii (strain ATCC BAA-461 / DSM 12804 / CCUG 43448), this protein is Ribosomal RNA large subunit methyltransferase E.